The sequence spans 127 residues: uncharacterized protein (127 aa).

A compositionally biased stretch (polar residues) spans 1 to 17; sequence MQGSVQIQKGNISSSYT. The interval 1–36 is disordered; sequence MQGSVQIQKGNISSSYTPEKHPSHPTSANGSMSPKR.

This is an uncharacterized protein from Treponema pallidum (strain Nichols).